The following is a 363-amino-acid chain: Phospho-N-acetylmuramoyl-pentapeptide-transferase (363 aa).

Helical transmembrane passes span 4 to 24, 28 to 48, 72 to 92, 96 to 116, 129 to 149, 169 to 189, 200 to 220, 241 to 261, 266 to 286, 294 to 314, and 342 to 362; these read NLLV…NVIV, IAIL…IKYF, TPTM…LMLA, NIYV…GLID, INAT…CMIV, LTID…IGSS, GLVT…CYLA, ELTV…WYNI, IFMG…ISVI, GIIG…IYSI, and IVSR…SSLI.

The protein belongs to the glycosyltransferase 4 family. MraY subfamily. It depends on Mg(2+) as a cofactor.

Its subcellular location is the cell inner membrane. It carries out the reaction UDP-N-acetyl-alpha-D-muramoyl-L-alanyl-gamma-D-glutamyl-meso-2,6-diaminopimeloyl-D-alanyl-D-alanine + di-trans,octa-cis-undecaprenyl phosphate = di-trans,octa-cis-undecaprenyl diphospho-N-acetyl-alpha-D-muramoyl-L-alanyl-D-glutamyl-meso-2,6-diaminopimeloyl-D-alanyl-D-alanine + UMP. Its pathway is cell wall biogenesis; peptidoglycan biosynthesis. Catalyzes the initial step of the lipid cycle reactions in the biosynthesis of the cell wall peptidoglycan: transfers peptidoglycan precursor phospho-MurNAc-pentapeptide from UDP-MurNAc-pentapeptide onto the lipid carrier undecaprenyl phosphate, yielding undecaprenyl-pyrophosphoryl-MurNAc-pentapeptide, known as lipid I. This chain is Phospho-N-acetylmuramoyl-pentapeptide-transferase, found in Orientia tsutsugamushi (strain Ikeda) (Rickettsia tsutsugamushi).